We begin with the raw amino-acid sequence, 352 residues long: Lipid storage droplets surface-binding protein 2 (352 aa).

2 disordered regions span residues 1-28 (MASAEQKHATGNGTTGNGTAMNDVDQPK) and 298-352 (NVEQ…VSSQ). Over residues 298 to 309 (NVEQSGGSSSDA) the composition is skewed to polar residues. The segment covering 315–329 (TTTSTTTTTTTSSTS) has biased composition (low complexity).

This sequence belongs to the perilipin family. Ubiquitous expression in early embryos. At stage 5 expression is restricted to the pole cells. At stage 11 expression is seen in the amnioserosa, refined to the fat body and midgut by stage 14. Also seen in the hindgut by the end of embryogenesis. Expression is seen in larval fat body (at protein level).

Its subcellular location is the cytoplasm. It localises to the lipid droplet. Functionally, essential for embryogenesis. Required for normal deposition of neutral lipids in the oocyte. This chain is Lipid storage droplets surface-binding protein 2, found in Drosophila melanogaster (Fruit fly).